Reading from the N-terminus, the 170-residue chain is Inosine/xanthosine triphosphatase (170 aa).

It belongs to the YjjX NTPase family. In terms of assembly, homodimer. It depends on Mg(2+) as a cofactor. Mn(2+) serves as cofactor.

It catalyses the reaction XTP + H2O = XDP + phosphate + H(+). The enzyme catalyses ITP + H2O = IDP + phosphate + H(+). Phosphatase that hydrolyzes non-canonical purine nucleotides such as XTP and ITP to their respective diphosphate derivatives. Probably excludes non-canonical purines from DNA/RNA precursor pool, thus preventing their incorporation into DNA/RNA and avoiding chromosomal lesions. This is Inosine/xanthosine triphosphatase from Aliivibrio fischeri (strain ATCC 700601 / ES114) (Vibrio fischeri).